A 592-amino-acid chain; its full sequence is A-type ATP synthase subunit A (592 aa).

Residue 233 to 240 (GPFGSGKT) coordinates ATP.

This sequence belongs to the ATPase alpha/beta chains family. As to quaternary structure, has multiple subunits with at least A(3), B(3), C, D, E, F, H, I and proteolipid K(x).

The protein resides in the cell membrane. It catalyses the reaction ATP + H2O + 4 H(+)(in) = ADP + phosphate + 5 H(+)(out). Functionally, component of the A-type ATP synthase that produces ATP from ADP in the presence of a proton gradient across the membrane. The A chain is the catalytic subunit. The sequence is that of A-type ATP synthase subunit A from Saccharolobus islandicus (strain Y.N.15.51 / Yellowstone #2) (Sulfolobus islandicus).